The chain runs to 1212 residues: uncharacterized protein (1212 aa).

Residues 1–31 show a composition bias toward polar residues; sequence MASIQTKLVSQPQTQQPLQNGFFNNYQQNIY. Disordered stretches follow at residues 1-70, 119-169, 211-231, 248-374, 655-681, 935-957, and 973-1125; these read MASI…HLQQ, PQAQ…FGTN, SLNN…SNNN, INIG…NNNK, QQQP…TQQQ, NQNQ…CNNA, and QLQP…QQLQ. Low complexity-rich tracts occupy residues 48 to 70 and 119 to 163; these read PQQQ…HLQQ and PQAQ…NNNN. A compositionally biased stretch (low complexity) spans 256–275; sequence NNSNTNNVNNINTNNTNNNN. Composition is skewed to polar residues over residues 276-285 and 292-317; these read KSGSIDQFGS and YVNS…SHSP. Positions 322-340 are enriched in low complexity; that stretch reads INSNININSNLQSPQNIQQ. The span at 341-351 shows a compositional bias: polar residues; sequence TILSPNISPNH. The segment covering 352–373 has biased composition (low complexity); sequence NNNNNNNNNNNNNNNNNNNNNN. Low complexity-rich tracts occupy residues 998–1022 and 1037–1125; these read NSVN…NNNN and QNNN…QQLQ.

This is an uncharacterized protein from Dictyostelium discoideum (Social amoeba).